We begin with the raw amino-acid sequence, 1289 residues long: Pesticidal crystal protein Cry5Ab (1289 aa).

Residues 1263–1289 (PLPTDDQNSEGNTASSTNSDTSMNNNQ) form a disordered region. Positions 1274–1289 (NTASSTNSDTSMNNNQ) are enriched in low complexity.

This sequence belongs to the delta endotoxin family.

Endotoxin with nematicidal activity. The polypeptide is Pesticidal crystal protein Cry5Ab (cry5Ab) (Bacillus thuringiensis subsp. darmstadiensis).